We begin with the raw amino-acid sequence, 1189 residues long: Tyrosine-protein phosphatase non-receptor type 14 (1189 aa).

The FERM domain occupies 21 to 306; the sequence is FVTRIRLLDS…TRHKFYKQNK (286 aa). 7 positions are modified to phosphoserine: Ser-314, Ser-461, Ser-486, Ser-591, Ser-593, Ser-594, and Ser-646. Positions 744–775 are disordered; it reads ARIPNRPPPEYPGPRKSVSNGALRQDQGTPLP. A compositionally biased stretch (polar residues) spans 760–771; that stretch reads SVSNGALRQDQG. The residue at position 833 (Ser-833) is a Phosphoserine. The region spanning 911–1182 is the Tyrosine-protein phosphatase domain; that stretch reads VFTEYEQIPN…KFVYQVLVQF (272 aa). Cys-1123 serves as the catalytic Phosphocysteine intermediate. Residues 1123–1129 and Gln-1167 each bind substrate; that span reads CSAGVGR.

The protein belongs to the protein-tyrosine phosphatase family. Non-receptor class subfamily. Interacts with FLT4; the interaction is enhanced by stimulation with VEGFC. Interacts (via PPxY motifs) with YAP1 (via WW domains); this interaction leads to the cytoplasmic sequestration of YAP1 and inhibits its transcriptional coactivator activity. Ubiquitinated by the ECS (Elongin BC-CUL2/5-SOCS-box protein)/LRR1 E3 ligase complex and subsequently targeted to proteasomal degradation. As to expression, thymus; in cells of both hematopoietic and non-hematopoietic origins.

Its subcellular location is the cytoplasm. It is found in the cytoskeleton. The protein localises to the nucleus. It carries out the reaction O-phospho-L-tyrosyl-[protein] + H2O = L-tyrosyl-[protein] + phosphate. In terms of biological role, protein tyrosine phosphatase which may play a role in the regulation of lymphangiogenesis, cell-cell adhesion, cell-matrix adhesion, cell migration, cell growth and also regulates TGF-beta gene expression, thereby modulating epithelial-mesenchymal transition. Mediates beta-catenin dephosphorylation at adhesion junctions. Acts as a negative regulator of the oncogenic property of YAP, a downstream target of the hippo pathway, in a cell density-dependent manner. May function as a tumor suppressor. The sequence is that of Tyrosine-protein phosphatase non-receptor type 14 (Ptpn14) from Mus musculus (Mouse).